The sequence spans 929 residues: Protocadherin gamma-B3 (929 aa).

Positions 1 to 30 (MGNSSGWRGPAGQRRMLFLFLLSLLDQALS) are cleaved as a signal peptide. Cadherin domains follow at residues 31–133 (EPIR…PPTF), 134–242 (SQNI…PPVF), 243–347 (TQDM…APEI), 348–452 (TLAS…VPVF), 453–562 (HQAS…APLV), and 570–675 (EGSA…QPDL). The Extracellular portion of the chain corresponds to 31-691 (EPIRYAIPEE…SDPQAELQFH (661 aa)). The N-linked (GlcNAc...) asparagine glycan is linked to N136. N419 and N545 each carry an N-linked (GlcNAc...) asparagine glycan. A helical transmembrane segment spans residues 692-712 (LVVALALISVLFLLAVILAIS). Topologically, residues 713 to 929 (LRLRCSSRPA…KKKSGKKEKK (217 aa)) are cytoplasmic. Disordered stretches follow at residues 791-838 (NDNP…WPNN) and 899-929 (ATLT…KEKK). A compositionally biased stretch (basic residues) spans 919 to 929 (NKKKSGKKEKK).

The protein localises to the cell membrane. Potential calcium-dependent cell-adhesion protein. May be involved in the establishment and maintenance of specific neuronal connections in the brain. This Homo sapiens (Human) protein is Protocadherin gamma-B3 (PCDHGB3).